The chain runs to 131 residues: Bacteriohemerythrin (131 aa).

Fe cation-binding residues include His-22, His-58, Glu-62, His-77, His-81, His-117, and Asp-122.

Belongs to the hemerythrin family. As to quaternary structure, monomer.

Its function is as follows. Oxygen-binding protein. May be involved in a storage mechanism or for delivery to oxygen-requiring enzymes. The oxygen-binding site contains two iron atoms. The protein is Bacteriohemerythrin of Methylococcus capsulatus (strain ATCC 33009 / NCIMB 11132 / Bath).